The chain runs to 123 residues: Large ribosomal subunit protein bL12 (123 aa).

This sequence belongs to the bacterial ribosomal protein bL12 family. Homodimer. Part of the ribosomal stalk of the 50S ribosomal subunit. Forms a multimeric L10(L12)X complex, where L10 forms an elongated spine to which 2 to 4 L12 dimers bind in a sequential fashion. Binds GTP-bound translation factors.

In terms of biological role, forms part of the ribosomal stalk which helps the ribosome interact with GTP-bound translation factors. Is thus essential for accurate translation. The polypeptide is Large ribosomal subunit protein bL12 (Chlorobium luteolum (strain DSM 273 / BCRC 81028 / 2530) (Pelodictyon luteolum)).